Consider the following 116-residue polypeptide: Ig heavy chain V region 441 (116 aa).

Residues 1–18 (MDFGLIFFIVALLKGVQC) form the signal peptide. In terms of domain architecture, Ig-like spans 19–116 (EVKLLESGGG…EDTALYYCAR (98 aa)).

This chain is Ig heavy chain V region 441, found in Mus musculus (Mouse).